Here is a 1072-residue protein sequence, read N- to C-terminus: RIMS-binding protein 2 (1072 aa).

The SH3 1 domain maps to 181–248; it reads GKVHLCVARY…PSNFVDFIQD (68 aa). 3 consecutive Fibronectin type-III domains span residues 311–404, 407–489, and 503–604; these read VPYP…GKDV, APSQ…KKEA, and PPQD…VPPA. 2 disordered regions span residues 597 to 681 and 713 to 800; these read PDLL…APVS and SAGQ…TSHN. Residues 599 to 615 are compositionally biased toward pro residues; the sequence is LLVPPAPHPRTAPPPKP. Basic and acidic residues predominate over residues 620-635; it reads MDTKDQHLGPHVKVDE. Residues 660-670 are compositionally biased toward low complexity; sequence GPGRRSPSPSR. Residues serine 720 and serine 728 each carry the phosphoserine modification. Composition is skewed to basic and acidic residues over residues 730–743 and 754–765; these read EVKRRGTSVDDFLK and CHGDEYHTESSR. A compositionally biased stretch (acidic residues) spans 771 to 781; sequence DIMEEDEEELY. Phosphoserine occurs at positions 852 and 859. Threonine 861 is modified (phosphothreonine). SH3 domains lie at 868–936 and 972–1039; these read LPAR…EIHA and VPTR…EVPD. A disordered region spans residues 1044-1072; it reads HLSDAPPHYSHDPPMRSKAKRKKSVHFTP. Basic residues predominate over residues 1060–1072; the sequence is SKAKRKKSVHFTP.

This sequence belongs to the RIMBP family. In terms of assembly, interacts with RIMS1, RIMS2, CACNA1D and CACNA1B, and potentially with other Ca(2+) channel alpha-1 isoforms.

The protein resides in the cell membrane. The protein localises to the synapse. Its function is as follows. Plays a role in the synaptic transmission as bifunctional linker that interacts simultaneously with RIMS1, RIMS2, CACNA1D and CACNA1B. This is RIMS-binding protein 2 (Rimbp2) from Mus musculus (Mouse).